We begin with the raw amino-acid sequence, 557 residues long: Eukaryotic translation initiation factor 3 subunit D-2 (557 aa).

The RNA gate stretch occupies residues 292-306 (QFDMLTVNETALEPP). The tract at residues 533–557 (FDSDNNDGEETSDDRPFLNSKDNKL) is disordered. Over residues 545 to 557 (DDRPFLNSKDNKL) the composition is skewed to basic and acidic residues.

This sequence belongs to the eIF-3 subunit D family. Component of the eukaryotic translation initiation factor 3 (eIF-3) complex. The eIF-3 complex interacts with pix.

The protein localises to the cytoplasm. In terms of biological role, mRNA cap-binding component of the eukaryotic translation initiation factor 3 (eIF-3) complex, which is involved in protein synthesis of a specialized repertoire of mRNAs and, together with other initiation factors, stimulates binding of mRNA and methionyl-tRNAi to the 40S ribosome. The eIF-3 complex specifically targets and initiates translation of a subset of mRNAs involved in cell proliferation. In the eIF-3 complex, eif3d specifically recognizes and binds the 7-methylguanosine cap of a subset of mRNAs. The sequence is that of Eukaryotic translation initiation factor 3 subunit D-2 from Drosophila grimshawi (Hawaiian fruit fly).